The sequence spans 63 residues: Large ribosomal subunit protein bL28 (63 aa).

This sequence belongs to the bacterial ribosomal protein bL28 family.

This Clostridium perfringens (strain ATCC 13124 / DSM 756 / JCM 1290 / NCIMB 6125 / NCTC 8237 / Type A) protein is Large ribosomal subunit protein bL28.